A 478-amino-acid chain; its full sequence is Protein WVD2-like 7 (478 aa).

2 disordered regions span residues 201 to 326 (DSAL…TGST) and 385 to 420 (PMPS…SASI). The segment covering 208-217 (AGSKLDEHAS) has biased composition (basic and acidic residues). Polar residues-rich tracts occupy residues 219-232 (KPSN…SSVN) and 264-277 (GSSL…NVDA). Basic and acidic residues predominate over residues 278–289 (KSQKELRPKKTI). Composition is skewed to polar residues over residues 309–326 (RCKT…TGST) and 407–420 (VAQS…SASI).

This sequence belongs to the TPX2 family. In terms of tissue distribution, expressed in seedlings.

The protein localises to the cytoplasm. The protein resides in the cytoskeleton. Its function is as follows. Microtubule-associated protein (MAP) that regulates the orientation of interphase cortical microtubules. The polypeptide is Protein WVD2-like 7 (Arabidopsis thaliana (Mouse-ear cress)).